A 322-amino-acid polypeptide reads, in one-letter code: MTSPSTIKQKFIAKGHQLGVVAVGFSDGQPNQGVDPSGLIEAGLLDQLRDDLEYDIRHDGQVHTYAEFVPEHDPNHRGMKKPRTVSAATQQLSRQVYEHAREGRLVLTLGGDHSIAIGTISGTAKAIRERLGREMAVIWVDAHADINRPEDSDSGNIHGMPLAFLTGLAKDDNEDMFGWLQPDNLISPRKLVYIGLRDVDRAEKRLLREHGIKAFSMHDIDKYGIGRVVEMALAHIGQDTPIHLSFDVDALDPQWAPSTGTPVRGGLTLREGDFIAESIHETGSLVAMDLVEVNPTLETLGASETIRAGCSLVRSALGDTLL.

The Mn(2+) site is built by histidine 113, aspartate 141, histidine 143, and aspartate 145. Substrate-binding positions include 143–147 (HADIN), 154–156 (SGN), and aspartate 200. Mn(2+)-binding residues include aspartate 247 and aspartate 249. Residues threonine 261 and glutamate 292 each coordinate substrate.

Belongs to the arginase family. In terms of assembly, homotrimer. Mn(2+) is required as a cofactor.

The catalysed reaction is L-arginine + H2O = urea + L-ornithine. It participates in nitrogen metabolism; urea cycle; L-ornithine and urea from L-arginine: step 1/1. The polypeptide is Arginase (ARG) (Coccidioides posadasii (strain C735) (Valley fever fungus)).